Reading from the N-terminus, the 194-residue chain is Endonuclease V (194 aa).

Mg(2+) contacts are provided by aspartate 31 and glutamate 95.

This sequence belongs to the endonuclease V family. Mg(2+) is required as a cofactor.

It is found in the cytoplasm. It catalyses the reaction Endonucleolytic cleavage at apurinic or apyrimidinic sites to products with a 5'-phosphate.. DNA repair enzyme involved in the repair of deaminated bases. Selectively cleaves double-stranded DNA at the second phosphodiester bond 3' to a deoxyinosine leaving behind the intact lesion on the nicked DNA. The polypeptide is Endonuclease V (Pyrococcus abyssi (strain GE5 / Orsay)).